Reading from the N-terminus, the 110-residue chain is MGDDELAEIRRQRMMQMQQQQMAEQDQIQRQQQMQAQIQSVLMQVMEPEARERLNTIRLTKPEFAASVEQQIVSLAQSGRLRQKITDEQLRQLLTQIVPQKKEFNIRRVG.

This sequence belongs to the PDCD5 family.

This Methanocorpusculum labreanum (strain ATCC 43576 / DSM 4855 / Z) protein is DNA-binding protein Mlab_1482.